Here is a 151-residue protein sequence, read N- to C-terminus: NADPH-dependent 7-cyano-7-deazaguanine reductase (151 aa).

Cysteine 51 serves as the catalytic Thioimide intermediate. Aspartate 58 serves as the catalytic Proton donor. Substrate-binding positions include 73 to 75 (VES) and 92 to 93 (HE).

Belongs to the GTP cyclohydrolase I family. QueF type 1 subfamily.

The protein localises to the cytoplasm. The enzyme catalyses 7-aminomethyl-7-carbaguanine + 2 NADP(+) = 7-cyano-7-deazaguanine + 2 NADPH + 3 H(+). It functions in the pathway tRNA modification; tRNA-queuosine biosynthesis. In terms of biological role, catalyzes the NADPH-dependent reduction of 7-cyano-7-deazaguanine (preQ0) to 7-aminomethyl-7-deazaguanine (preQ1). This is NADPH-dependent 7-cyano-7-deazaguanine reductase from Bacteroides fragilis (strain YCH46).